A 481-amino-acid polypeptide reads, in one-letter code: tRNA-guanine(15) transglycosylase (481 aa).

Residue aspartate 87 is the Nucleophile of the active site. Positions 122 and 191 each coordinate substrate. Residues cysteine 273, cysteine 275, and cysteine 278 each coordinate Zn(2+).

It belongs to the archaeosine tRNA-ribosyltransferase family. Zn(2+) is required as a cofactor.

It catalyses the reaction guanosine(15) in tRNA + 7-cyano-7-deazaguanine = 7-cyano-7-carbaguanosine(15) in tRNA + guanine. It functions in the pathway tRNA modification; archaeosine-tRNA biosynthesis. Exchanges the guanine residue with 7-cyano-7-deazaguanine (preQ0) at position 15 in the dihydrouridine loop (D-loop) of archaeal tRNAs. The polypeptide is tRNA-guanine(15) transglycosylase (Archaeoglobus fulgidus (strain ATCC 49558 / DSM 4304 / JCM 9628 / NBRC 100126 / VC-16)).